Reading from the N-terminus, the 391-residue chain is Adaptive-response sensory kinase SasA (391 aa).

One can recognise a Histidine kinase domain in the interval 169 to 391 (MLAHDLRSPL…CFHFTLPVCR (223 aa)). Residue His172 is modified to Phosphohistidine; by autocatalysis.

As to quaternary structure, homooligomerizes. Interacts with KaiC. Participates in the KaiABC clock complex, whose core is composed of a KaiC homohexamer, 6 KaiB and up to 6 KaiA dimers. SasA and KaiB(fs) compete to bind to KaiC.

The catalysed reaction is ATP + protein L-histidine = ADP + protein N-phospho-L-histidine.. Member of the two-component regulatory system SasA/RpaA involved in genome-wide circadian gene expression. One of several clock output pathways. Participates in the Kai clock protein complex, the main circadian regulator in cyanobacteria, via its interaction with KaiC. KaiC enhances the autophosphorylation activity of SasA, which then transfers its phosphate group to RpaA to activate it. In addition to its output function, recruits fold-shifted KaiB (KaiB(fs)) to KaiC to cooperatively form the KaiB(6):KaiC(6) complex (independent of SasA kinase activity). Required for robustness of the circadian rhythm of gene expression and is involved in clock output, also required for adaptation to light/dark cycles. The sequence is that of Adaptive-response sensory kinase SasA from Rippkaea orientalis (strain PCC 8801 / RF-1) (Cyanothece sp. (strain PCC 8801)).